The sequence spans 146 residues: Endothelial differentiation-related factor 1 homolog (146 aa).

Positions 13–53 are disordered; the sequence is RKKGSAAQSKSKQAVTAAQRKGEAVETSKKWAAGQNKQHVV. Positions 17–31 are enriched in low complexity; the sequence is SAAQSKSKQAVTAAQ. Over residues 32 to 41 the composition is skewed to basic and acidic residues; it reads RKGEAVETSK. The HTH cro/C1-type domain maps to 80 to 134; that stretch reads IQQGRQNKGLTQKDLATKINEKPQIIAEYECGKAIPNNQVMGKIERAIGLKLRGK. Positions 91 to 110 form a DNA-binding region, H-T-H motif; sequence QKDLATKINEKPQIIAEYEC.

It is found in the nucleus. In terms of biological role, probable transcriptional coactivator. This is Endothelial differentiation-related factor 1 homolog (edf1) from Danio rerio (Zebrafish).